The primary structure comprises 121 residues: Small ribosomal subunit protein bS6m (121 aa).

Belongs to the bacterial ribosomal protein bS6 family. In terms of assembly, component of the mitochondrial ribosome small subunit (28S) which comprises a 12S rRNA and about 30 distinct proteins.

It is found in the mitochondrion. The sequence is that of Small ribosomal subunit protein bS6m (MRPS6) from Gallus gallus (Chicken).